The following is a 120-amino-acid chain: ATP-dependent Clp protease adapter protein ClpS (120 aa).

Residues 9 to 32 are disordered; sequence LTFNQDHPAEHEDDSSGIAVQESK.

It belongs to the ClpS family. Binds to the N-terminal domain of the chaperone ClpA.

Functionally, involved in the modulation of the specificity of the ClpAP-mediated ATP-dependent protein degradation. This chain is ATP-dependent Clp protease adapter protein ClpS, found in Ectopseudomonas mendocina (strain ymp) (Pseudomonas mendocina).